Consider the following 233-residue polypeptide: Probable chemoreceptor glutamine deamidase CheD (233 aa).

Belongs to the CheD family.

The enzyme catalyses L-glutaminyl-[protein] + H2O = L-glutamyl-[protein] + NH4(+). Its function is as follows. Probably deamidates glutamine residues to glutamate on methyl-accepting chemotaxis receptors (MCPs), playing an important role in chemotaxis. The sequence is that of Probable chemoreceptor glutamine deamidase CheD from Ralstonia nicotianae (strain ATCC BAA-1114 / GMI1000) (Ralstonia solanacearum).